A 285-amino-acid chain; its full sequence is Acetylglutamate kinase (285 aa).

Substrate is bound by residues 69–70 (GG), arginine 91, and asparagine 183.

This sequence belongs to the acetylglutamate kinase family. ArgB subfamily.

The protein resides in the cytoplasm. It carries out the reaction N-acetyl-L-glutamate + ATP = N-acetyl-L-glutamyl 5-phosphate + ADP. The protein operates within amino-acid biosynthesis; L-arginine biosynthesis; N(2)-acetyl-L-ornithine from L-glutamate: step 2/4. In terms of biological role, catalyzes the ATP-dependent phosphorylation of N-acetyl-L-glutamate. The polypeptide is Acetylglutamate kinase (Jannaschia sp. (strain CCS1)).